We begin with the raw amino-acid sequence, 77 residues long: Large ribosomal subunit protein bL31 (77 aa).

The Zn(2+) site is built by C16, C18, C37, and C40.

Belongs to the bacterial ribosomal protein bL31 family. Type A subfamily. Part of the 50S ribosomal subunit. The cofactor is Zn(2+).

Functionally, binds the 23S rRNA. The chain is Large ribosomal subunit protein bL31 from Pseudomonas fluorescens (strain SBW25).